We begin with the raw amino-acid sequence, 50 residues long: Gene 38 protein (50 aa).

The polypeptide is Gene 38 protein (38) (Mycobacterium (Mycobacteriophage D29)).